A 189-amino-acid chain; its full sequence is H/ACA ribonucleoprotein complex subunit 1-like protein 2 (189 aa).

Positions 1 to 12 (MRPPRGGGSFRG) are enriched in gly residues. Disordered stretches follow at residues 1 to 39 (MRPP…NYDE) and 129 to 189 (RFLP…RGRA). The span at 162–177 (GRGAPRGASRGFQPRG) shows a compositional bias: low complexity.

The protein belongs to the GAR1 family. Component of the small nucleolar ribonucleoprotein particle containing H/ACA-type snoRNAs (H/ACA snoRNPs).

The protein resides in the nucleus. Its subcellular location is the nucleolus. Required for ribosome biogenesis. Part of a complex which catalyzes pseudouridylation of rRNA. This involves the isomerization of uridine such that the ribose is subsequently attached to C5, instead of the normal N1. Pseudouridine ('psi') residues may serve to stabilize the conformation of rRNAs. The polypeptide is H/ACA ribonucleoprotein complex subunit 1-like protein 2 (Arabidopsis thaliana (Mouse-ear cress)).